The sequence spans 96 residues: Putative antiholin (96 aa).

At 1–4 (MIEM) the chain is on the periplasmic side. Cytoplasmic segments lie at residues 1–32 (MIEMEFGKELLVYMTFLVVVTPVFVQAIKKTE) and 26–29 (QAIK). Residues 5–25 (EFGKELLVYMTFLVVVTPVFV) form a helical membrane-spanning segment. A helical membrane pass occupies residues 33–55 (LVPSKWLPTVSILIGAILGALAT). The Periplasmic portion of the chain corresponds to 56–60 (FLDGS). Residues 61–81 (GSLATMIWAGALAGAGGTGLF) form a helical membrane-spanning segment. Topologically, residues 82-96 (EQFTNRSKKYGEDDK) are cytoplasmic.

In terms of assembly, homomultimer. Interacts with isoform Antiholin; this interaction blocks the holin homomultimerization and delays host cell lysis.

It is found in the host cell inner membrane. In terms of biological role, accumulates harmlessly in the cytoplasmic membrane until it reaches a critical concentration that triggers the formation of micron-scale pores (holes) causing host cell membrane disruption and endolysin escape into the periplasmic space. Determines the precise timing of host cell lysis. Participates with the endolysin and spanin proteins in the sequential events which lead to the programmed host cell lysis releasing the mature viral particles from the host cell. Isoform Antiholin: Counteracts the aggregation of the holin molecules and thus of pore formation. The chain is Putative antiholin (hol) from Listeria monocytogenes (Bacteriophage A118).